Here is a 78-residue protein sequence, read N- to C-terminus: uncharacterized protein (78 aa).

Residues 20-78 (LQDLFPPHFGNEEADEDDEDGDKYGDDDGEFYGDNDGDNDGDNDGVNDGVGDGPPSTLL) are disordered. Acidic residues predominate over residues 31 to 64 (EEADEDDEDGDKYGDDDGEFYGDNDGDNDGDNDG).

This is an uncharacterized protein from Dictyostelium discoideum (Social amoeba).